A 329-amino-acid chain; its full sequence is Prostaglandin reductase 1 (329 aa).

T18 is modified (phosphothreonine). The residue at position 20 (S20) is a Phosphoserine. Residues 152 to 155, K178, Y193, N217, 239 to 245, 270 to 272, and N321 each bind NADP(+); these read GAVG, CGAISTY, and FIV. An N6-(2-hydroxyisobutyryl)lysine; alternate modification is found at K178. N6-acetyllysine; alternate is present on K178.

Belongs to the NADP-dependent oxidoreductase L4BD family. In terms of assembly, monomer or homodimer. In terms of tissue distribution, ubiquitously distributed in various tissues and leukocytes, the kidney and liver had the highest enzyme activities.

It localises to the cytoplasm. It catalyses the reaction 13,14-dihydro-15-oxo-prostaglandin E1 + NADP(+) = 15-oxoprostaglandin E1 + NADPH + H(+). The catalysed reaction is 13,14-dihydro-15-oxo-prostaglandin E2 + NADP(+) = 15-oxoprostaglandin E2 + NADPH + H(+). It carries out the reaction 13,14-dihydro-15-oxo-prostaglandin E2 + NAD(+) = 15-oxoprostaglandin E2 + NADH + H(+). The enzyme catalyses 13,14-dihydro-15-oxo-prostaglandin F1alpha + NADP(+) = 15-oxoprostaglandin F1alpha + NADPH + H(+). It catalyses the reaction 13,14-dihydro-15-oxo-PGF2alpha + NADP(+) = 15-oxoprostaglandin F2alpha + NADPH + H(+). The catalysed reaction is leukotriene B4 + NADP(+) = 12-oxo-leukotriene B4 + NADPH + H(+). It carries out the reaction 20-hydroxy-leukotriene B4 + NADP(+) = 12-oxo-20-hydroxy-leukotriene B4 + NADPH + H(+). The enzyme catalyses 6-trans-leukotriene B4 + NADP(+) = 12-oxo-(5S)-hydroxy-(6E,8E,10E,14Z)-eicosatetraenoate + NADPH + H(+). It catalyses the reaction (5S,12S)-dihydroxy-(6E,10E,12E,14Z)-eicosatetraenoate + NADP(+) = 12-oxo-(5S)-hydroxy-(6E,8E,10E,14Z)-eicosatetraenoate + NADPH + H(+). The catalysed reaction is 15-oxo-(5S,6R)-dihydroxy-(7E,9E,11Z,13E)-eicosatetraenoate + NADH + H(+) = 15-oxo-(5S,6R)-dihydroxy-(7E,9E,11Z)-eicosatrienoate + NAD(+). It carries out the reaction an n-alkanal + NADP(+) = an alk-2-enal + NADPH + H(+). The enzyme catalyses hexanal + NADP(+) = (E)-hex-2-enal + NADPH + H(+). It catalyses the reaction octanal + NADP(+) = (2E)-octenal + NADPH + H(+). The catalysed reaction is decanal + NADP(+) = (2E)-decenal + NADPH + H(+). It carries out the reaction dodecanal + NADP(+) = (2E)-dodecenal + NADPH + H(+). The enzyme catalyses 4-hydroxynonanal + NADP(+) = (E)-4-hydroxynon-2-enal + NADPH + H(+). It catalyses the reaction pentan-2-one + NADP(+) = (E)-pent-3-en-2-one + NADPH + H(+). The catalysed reaction is nonan-2-one + NADP(+) = (3E)-nonen-2-one + NADPH + H(+). Its activity is regulated as follows. Down-regulated by nonsteroidal anti-inflammatory drugs diclofenac, indomethacin and niflumic acid. In terms of biological role, NAD(P)H-dependent oxidoreductase involved in metabolic inactivation of pro- and anti-inflammatory eicosanoids: prostaglandins (PG), leukotrienes (LT) and lipoxins (LX). Preferentially uses NADPH over NADH as cofactor. Catalyzes with high efficiency the reduction of the 13,14 double bond of 15-oxoPGs, including 15-oxo-PGE1, 15-oxo-PGE2, 15-oxo-PGF1-alpha and 15-oxo-PGF2-alpha. Catalyzes with lower efficiency the oxidation of the hydroxyl group at C12 of LTB4 and its derivatives, converting them into biologically less active 12-oxo-LTB4 metabolites. Reduces 15-oxo-LXA4 to 13,14 dihydro-15-oxo-LXA4 and may promote neutrophil recruitment at the inflammatory site. Plays a role in metabolic detoxification of alkenals and ketones. Reduces alpha,beta-unsaturated alkenals and ketones, particularly those with medium-chain length, showing highest affinity toward (2E)-decenal and (3E)-3-nonen-2-one. May inactivate 4-hydroxy-2-nonenal, a cytotoxic lipid constituent of oxidized low-density lipoprotein particles. The protein is Prostaglandin reductase 1 (PTGR1) of Sus scrofa (Pig).